Reading from the N-terminus, the 168-residue chain is uncharacterized protein (168 aa).

2 consecutive transmembrane segments (helical) span residues 41–61 and 133–153; these read LLPW…LFFI and KFVI…FFVL.

The protein resides in the cell membrane. This is an uncharacterized protein from Thermotoga maritima (strain ATCC 43589 / DSM 3109 / JCM 10099 / NBRC 100826 / MSB8).